The chain runs to 823 residues: Lon protease (823 aa).

The Lon N-terminal domain maps to 22–217; sequence LPLLPVRDVV…KVNEHLNKEH (196 aa). 369–376 lines the ATP pocket; sequence GPPGVGKT. The 182-residue stretch at 605–786 folds into the Lon proteolytic domain; it reads KNEVGIVTGL…DDVLAVALET (182 aa). Active-site residues include S692 and K735. The segment at 788–823 is disordered; it reads PPPPPASEGKPAATVKAPPRRGIAAPRKGAMAGAKS.

It belongs to the peptidase S16 family. As to quaternary structure, homohexamer. Organized in a ring with a central cavity.

Its subcellular location is the cytoplasm. The catalysed reaction is Hydrolysis of proteins in presence of ATP.. Functionally, ATP-dependent serine protease that mediates the selective degradation of mutant and abnormal proteins as well as certain short-lived regulatory proteins. Required for cellular homeostasis and for survival from DNA damage and developmental changes induced by stress. Degrades polypeptides processively to yield small peptide fragments that are 5 to 10 amino acids long. Binds to DNA in a double-stranded, site-specific manner. The chain is Lon protease from Geobacter metallireducens (strain ATCC 53774 / DSM 7210 / GS-15).